A 462-amino-acid polypeptide reads, in one-letter code: Glutamate--tRNA ligase 1 (462 aa).

The 'HIGH' region motif lies at 8 to 18; it reads PSPTGYLHIGG. A 'KMSKS' region motif is present at residues 236-240; the sequence is KLSKR. ATP is bound at residue Lys239.

It belongs to the class-I aminoacyl-tRNA synthetase family. Glutamate--tRNA ligase type 1 subfamily. As to quaternary structure, monomer.

It localises to the cytoplasm. It catalyses the reaction tRNA(Glu) + L-glutamate + ATP = L-glutamyl-tRNA(Glu) + AMP + diphosphate. Catalyzes the attachment of glutamate to tRNA(Glu) in a two-step reaction: glutamate is first activated by ATP to form Glu-AMP and then transferred to the acceptor end of tRNA(Glu). The chain is Glutamate--tRNA ligase 1 from Sulfurovum sp. (strain NBC37-1).